We begin with the raw amino-acid sequence, 545 residues long: Putative serine/threonine-protein kinase L673 (545 aa).

Positions Arg13–Lys125 constitute a Cyclin N-terminal domain. The Protein kinase domain maps to Ile264–Phe543. ATP is bound by residues Leu270–Val278 and Lys291. The active-site Proton acceptor is the Asp384.

It belongs to the protein kinase superfamily. Ser/Thr protein kinase family.

The catalysed reaction is L-seryl-[protein] + ATP = O-phospho-L-seryl-[protein] + ADP + H(+). It carries out the reaction L-threonyl-[protein] + ATP = O-phospho-L-threonyl-[protein] + ADP + H(+). This chain is Putative serine/threonine-protein kinase L673, found in Acanthamoeba polyphaga (Amoeba).